The chain runs to 103 residues: Nucleoid-associated protein BH0035 (103 aa).

Residues methionine 1 to lysine 20 are compositionally biased toward low complexity. The tract at residues methionine 1–threonine 29 is disordered.

The protein belongs to the YbaB/EbfC family. In terms of assembly, homodimer.

The protein resides in the cytoplasm. Its subcellular location is the nucleoid. Functionally, binds to DNA and alters its conformation. May be involved in regulation of gene expression, nucleoid organization and DNA protection. This is Nucleoid-associated protein BH0035 from Halalkalibacterium halodurans (strain ATCC BAA-125 / DSM 18197 / FERM 7344 / JCM 9153 / C-125) (Bacillus halodurans).